The sequence spans 210 residues: 3-hexulose-6-phosphate synthase (210 aa).

The protein belongs to the HPS/KGPDC family. HPS subfamily.

The catalysed reaction is D-ribulose 5-phosphate + formaldehyde = D-arabino-hex-3-ulose 6-phosphate. It functions in the pathway one-carbon metabolism; formaldehyde assimilation via RuMP pathway; D-fructose 6-phosphate from D-ribulose 5-phosphate and formaldehyde: step 1/2. Its function is as follows. Catalyzes the condensation of ribulose 5-phosphate with formaldehyde to form 3-hexulose 6-phosphate. The sequence is that of 3-hexulose-6-phosphate synthase from Staphylococcus aureus (strain USA300).